A 132-amino-acid polypeptide reads, in one-letter code: Small ribosomal subunit protein uS8c (132 aa).

This sequence belongs to the universal ribosomal protein uS8 family. As to quaternary structure, part of the 30S ribosomal subunit.

It is found in the plastid. Its subcellular location is the chloroplast. In terms of biological role, one of the primary rRNA binding proteins, it binds directly to 16S rRNA central domain where it helps coordinate assembly of the platform of the 30S subunit. In Calycanthus floridus var. glaucus (Eastern sweetshrub), this protein is Small ribosomal subunit protein uS8c (rps8).